The primary structure comprises 332 residues: MAKVYYDEDASLEVLKGKTVAIIGYGSQGHAHALNLRDSGVNVIIGLYSGSRSAEKAKAEGFEVLIPDEAAKKADIIMMLIPDTIQPEVYETAILPNLDEGNALAFAHGFNIHFNQIVPPEYVDVFLVAPKGPGHLVRWQYEEGKGVPGLVAVHQDFTGQAKDIALAYAKGVGCTRAGLIETTFKEETETDLFGEQAVLCGGATALIKAGFETLVEAGYQPEVAYFECLHELKLIVDLIYQYGISGMRYSISDTARYGDVTRGDRIYEAVKPIHKKILDEIQRGEFAKEWVLENIARRPHFDALVKRDEEHPVEKVGKELRKMMPWLEGKGL.

In terms of domain architecture, KARI N-terminal Rossmann spans 2-182; it reads AKVYYDEDAS…GCTRAGLIET (181 aa). Residues 25-28, serine 51, serine 53, and 83-86 each bind NADP(+); these read YGSQ and DTIQ. Residue histidine 108 is part of the active site. Residue glycine 134 coordinates NADP(+). The region spanning 183-327 is the KARI C-terminal knotted domain; it reads TFKEETETDL…KELRKMMPWL (145 aa). Mg(2+)-binding residues include aspartate 191, glutamate 195, glutamate 227, and glutamate 231. Serine 252 is a substrate binding site.

This sequence belongs to the ketol-acid reductoisomerase family. Mg(2+) is required as a cofactor.

The catalysed reaction is (2R)-2,3-dihydroxy-3-methylbutanoate + NADP(+) = (2S)-2-acetolactate + NADPH + H(+). It carries out the reaction (2R,3R)-2,3-dihydroxy-3-methylpentanoate + NADP(+) = (S)-2-ethyl-2-hydroxy-3-oxobutanoate + NADPH + H(+). The protein operates within amino-acid biosynthesis; L-isoleucine biosynthesis; L-isoleucine from 2-oxobutanoate: step 2/4. It participates in amino-acid biosynthesis; L-valine biosynthesis; L-valine from pyruvate: step 2/4. In terms of biological role, involved in the biosynthesis of branched-chain amino acids (BCAA). Catalyzes an alkyl-migration followed by a ketol-acid reduction of (S)-2-acetolactate (S2AL) to yield (R)-2,3-dihydroxy-isovalerate. In the isomerase reaction, S2AL is rearranged via a Mg-dependent methyl migration to produce 3-hydroxy-3-methyl-2-ketobutyrate (HMKB). In the reductase reaction, this 2-ketoacid undergoes a metal-dependent reduction by NADPH to yield (R)-2,3-dihydroxy-isovalerate. The chain is Ketol-acid reductoisomerase (NADP(+)) from Persephonella marina (strain DSM 14350 / EX-H1).